Here is a 458-residue protein sequence, read N- to C-terminus: MPN domain-containing protein (458 aa).

The segment at 1–37 is disordered; that stretch reads MGSEPPSSPQVVEEGADEEDEELSGAEDADLRSSSGR. Residues 14-28 are compositionally biased toward acidic residues; the sequence is EGADEEDEELSGAED. The region spanning 42-137 is the RAMA domain; the sequence is TRRGITLRVL…QYKTTWLHKY (96 aa). 3 residues coordinate DNA: Ser94, Ser96, and Trp116. The interval 147-175 is disordered; it reads SEGEDDEMGDDDEEEGKTTIPVEDKNKKS. Positions 148–161 are enriched in acidic residues; the sequence is EGEDDEMGDDDEEE. The region spanning 229–364 is the MPN domain; it reads VAVSSNVLLL…VASTITPFWV (136 aa). Residues His306, His308, and Asp319 each coordinate Zn(2+). The JAMM motif motif lies at 306–319; sequence HSHPRGPALPSLQD.

Belongs to the peptidase M67 family. In terms of processing, degraded following binding to N(6)-methyladenosine methylated DNA (m6A).

Probable protease. Acts as a sensor of N(6)-methyladenosine methylation on DNA (m6A): recognizes and binds m6A DNA, leading to its degradation. Binds only double strand DNA (dsDNA) in a sequence-independent manner. The protein is MPN domain-containing protein of Danio rerio (Zebrafish).